Here is a 199-residue protein sequence, read N- to C-terminus: Recombination protein RecR (199 aa).

The C4-type zinc-finger motif lies at 58–73 (CKTCGNIDTQSPCTVC). The Toprim domain occupies 81-176 (AMIVVVADVA…KVTRLAHGVP (96 aa)).

It belongs to the RecR family.

Its function is as follows. May play a role in DNA repair. It seems to be involved in an RecBC-independent recombinational process of DNA repair. It may act with RecF and RecO. In Bradyrhizobium sp. (strain BTAi1 / ATCC BAA-1182), this protein is Recombination protein RecR.